The primary structure comprises 261 residues: Probable septum site-determining protein MinC (261 aa).

The interval 106–144 (RAPAAKPADEAEPAAVPAVETAAAPAAAAAPEQSSDPAP) is disordered. Positions 118–144 (PAAVPAVETAAAPAAAAAPEQSSDPAP) are enriched in low complexity.

Belongs to the MinC family. In terms of assembly, interacts with MinD and FtsZ.

Its function is as follows. Cell division inhibitor that blocks the formation of polar Z ring septums. Rapidly oscillates between the poles of the cell to destabilize FtsZ filaments that have formed before they mature into polar Z rings. Prevents FtsZ polymerization. The chain is Probable septum site-determining protein MinC from Burkholderia orbicola (strain MC0-3).